The primary structure comprises 407 residues: MDNVLPGDSDLFPNISTNSSESNQFVQPAWQIVLWAAAYTVIVVTSVVGNVVVMWIILAHKRMRTVTNYFLVNLAFAEASMAAFNTVVNFTYAVHNEWYYGLFYCKFHNFFPIAAVFASIYSMTAVAFDRYMAIIHPLQPRLSATATKVVIFVIWVLALLLAFPQGYYSTTETMPGRVVCMIEWPEHPNRTYEKAYHICVTVLIYFLPLLVIGYAYTVVGITLWASEIPGDSSDRYHEQVSAKRKVVKMMIVVVCTFAICWLPFHVFFLLPYINPDLYVKKFIQQVYLAIMWLAMSSTMYNPIIYCCLNDRFRLGFKHAFRCCPFISAGDYEGLEMKSTRYLQTQGSVYKVSRLETTISTVVGAHEDEAEEGPKATPSSLDLTSNGSSRSNSKTMTESSSFYSNMLA.

Residues 1-31 (MDNVLPGDSDLFPNISTNSSESNQFVQPAWQ) are Extracellular-facing. Residues N14 and N18 are each glycosylated (N-linked (GlcNAc...) asparagine). A helical membrane pass occupies residues 32-54 (IVLWAAAYTVIVVTSVVGNVVVM). Topologically, residues 55–64 (WIILAHKRMR) are cytoplasmic. A helical membrane pass occupies residues 65–86 (TVTNYFLVNLAFAEASMAAFNT). Residues 87–106 (VVNFTYAVHNEWYYGLFYCK) are Extracellular-facing. An N-linked (GlcNAc...) asparagine glycan is attached at N89. Cysteines 105 and 180 form a disulfide. A helical membrane pass occupies residues 107–128 (FHNFFPIAAVFASIYSMTAVAF). The Cytoplasmic portion of the chain corresponds to 129 to 148 (DRYMAIIHPLQPRLSATATK). A helical transmembrane segment spans residues 149–169 (VVIFVIWVLALLLAFPQGYYS). Over 170–194 (TTETMPGRVVCMIEWPEHPNRTYEK) the chain is Extracellular. N189 carries an N-linked (GlcNAc...) asparagine glycan. The helical transmembrane segment at 195-219 (AYHICVTVLIYFLPLLVIGYAYTVV) threads the bilayer. Over 220-248 (GITLWASEIPGDSSDRYHEQVSAKRKVVK) the chain is Cytoplasmic. Residues 249 to 270 (MMIVVVCTFAICWLPFHVFFLL) traverse the membrane as a helical segment. At 271-283 (PYINPDLYVKKFI) the chain is on the extracellular side. A helical transmembrane segment spans residues 284-308 (QQVYLAIMWLAMSSTMYNPIIYCCL). Residues 309 to 407 (NDRFRLGFKH…SSSFYSNMLA (99 aa)) lie on the Cytoplasmic side of the membrane. C322 carries S-palmitoyl cysteine lipidation. The interval 365 to 407 (HEDEAEEGPKATPSSLDLTSNGSSRSNSKTMTESSSFYSNMLA) is disordered. Over residues 376–407 (TPSSLDLTSNGSSRSNSKTMTESSSFYSNMLA) the composition is skewed to polar residues.

Belongs to the G-protein coupled receptor 1 family. As to quaternary structure, interacts with ARRB1.

It localises to the cell membrane. Its function is as follows. This is a receptor for the tachykinin neuropeptide substance P. It is probably associated with G proteins that activate a phosphatidylinositol-calcium second messenger system. In Meriones unguiculatus (Mongolian jird), this protein is Substance-P receptor (TACR1).